The following is a 213-amino-acid chain: tRNA (guanine-N(7)-)-methyltransferase (213 aa).

The S-adenosyl-L-methionine site is built by glutamate 44, aspartate 69, aspartate 96, and aspartate 118. Aspartate 118 is a catalytic residue. Residue lysine 122 coordinates substrate. The tract at residues 124-129 (RHEKRR) is interaction with RNA. Substrate contacts are provided by residues aspartate 154 and 191 to 194 (TEYE).

It belongs to the class I-like SAM-binding methyltransferase superfamily. TrmB family.

The enzyme catalyses guanosine(46) in tRNA + S-adenosyl-L-methionine = N(7)-methylguanosine(46) in tRNA + S-adenosyl-L-homocysteine. Its pathway is tRNA modification; N(7)-methylguanine-tRNA biosynthesis. Its function is as follows. Catalyzes the formation of N(7)-methylguanine at position 46 (m7G46) in tRNA. In Streptococcus thermophilus (strain CNRZ 1066), this protein is tRNA (guanine-N(7)-)-methyltransferase.